The sequence spans 832 residues: WD repeat-containing protein 75 (832 aa).

WD repeat units follow at residues 4–43 (QCQI…KVYS), 47–86 (EECI…KLWD), 90–131 (GILI…QLVS), 145–184 (KEIS…YYFK), 193–230 (LKAT…RLWR), 236–275 (KEYT…VQWP), 278–317 (SEEK…SIID), 323–361 (SGII…QFYS), 375–424 (QQEF…KLWE), 431–477 (SFVL…KVWM), 490–528 (SWLC…TVWE), 532–572 (WDLK…CCWN), and 577–614 (ALEW…FLFQ). Positions 764 to 798 (SQSTEESKEDEEMKSEHSEADSSDETEEMESQKRF) are disordered.

In terms of assembly, component of the proposed t-UTP subcomplex of the ribosomal small subunit (SSU) processome. SSU processome is composed of more than 70 proteins and the RNA chaperone small nucleolar RNA (snoRNA) U3.

The protein resides in the nucleus. The protein localises to the nucleolus. Functionally, ribosome biogenesis factor. Part of the small subunit (SSU) processome, first precursor of the small eukaryotic ribosomal subunit. During the assembly of the SSU processome in the nucleolus, many ribosome biogenesis factors, an RNA chaperone and ribosomal proteins associate with the nascent pre-rRNA and work in concert to generate RNA folding, modifications, rearrangements and cleavage as well as targeted degradation of pre-ribosomal RNA by the RNA exosome. Involved in nucleolar processing of pre-18S ribosomal RNA. Required for optimal pre-ribosomal RNA transcription by RNA polymerase I. In Xenopus laevis (African clawed frog), this protein is WD repeat-containing protein 75 (wdr75).